The following is a 109-amino-acid chain: UPF0060 membrane protein HEAR0108 (109 aa).

Helical transmembrane passes span 7-27 (VALF…PYLW), 33-53 (SIWL…LLSL), 63-83 (AAYG…VDGI), and 87-107 (NWDV…MFAP).

It belongs to the UPF0060 family.

It is found in the cell inner membrane. This is UPF0060 membrane protein HEAR0108 from Herminiimonas arsenicoxydans.